The chain runs to 140 residues: UPF0132 membrane protein MJ1527 (140 aa).

3 helical membrane passes run methionine 40 to glutamate 60, alanine 70 to isoleucine 90, and isoleucine 92 to glycine 112.

This sequence belongs to the UPF0132 family.

Its subcellular location is the cell membrane. This Methanocaldococcus jannaschii (strain ATCC 43067 / DSM 2661 / JAL-1 / JCM 10045 / NBRC 100440) (Methanococcus jannaschii) protein is UPF0132 membrane protein MJ1527.